The sequence spans 50 residues: Thrombin-like enzyme BpirSP41 (50 aa).

Residues 1–50 enclose the Peptidase S1 domain; the sequence is VVGGDECDINEHPFLAFLYSHGYFCGLTLINQEWVLTAAHCDRRFMRIYL. The cysteines at positions 25 and 41 are disulfide-linked. Catalysis depends on His40, which acts as the Charge relay system.

The protein belongs to the peptidase S1 family. Snake venom subfamily. Monomer. N-glycosylated. Expressed by the venom gland.

Its subcellular location is the secreted. Inhibited by serine protease inhibitors PMSF, benzamidine, leupeptin and aprotinin, as well as by copper ions (Cu2+). Not inhibited by metalloprotease inhibitors EDTA, EGTA and 1,10-phenanthroline, as well as by barium (Ba2+) and calcium ion (Ca2+). Functionally, snake venom serine protease that interferes with the hemostatic system of the prey. It almost completely degrades both Aalpha (FGA) and Bbeta (FGB) chains of fibrinogen. It presents a higher ability to degrade fibrin clots than BpirSP27. It hydrolyzes chromogenic substrates S-2238 (used for testing thrombin activity), S-2222 (factor Xa), S-2266 (glandular kallikrein and factor XIa), and S-2302 (plasma kallikrein, factor XIa and XIIa). It shows a decrease in the clotting time of human plasma in the presence of increasing doses of the enzyme. Its minimum coagulant dose (MCD) is 20 ug. It promotes platelet aggregation with a maximum of aggregation of 20%, regardless of the concentration increase or the presence of calcium. It also shows 40% inhibition of the hemolytic activity promoted by the complement pathways and possess only a minor role in the induction of edema and pain in rat. This chain is Thrombin-like enzyme BpirSP41, found in Bothrops pirajai (Piraja's lancehead).